We begin with the raw amino-acid sequence, 75 residues long: Gas vesicle protein S (75 aa).

Belongs to the gas vesicle GvpA family.

The protein resides in the gas vesicle. Functionally, probably a minor component of the gas vesicle. Gas vesicles are hollow, gas filled proteinaceous nanostructures found in some microorganisms. It is not clear what function gas vesicles perform in soil bacteria. The sequence is that of Gas vesicle protein S from Streptomyces sp. (strain CB03234).